The primary structure comprises 56 residues: Endoglucanase Cel5A (56 aa).

Glu-45 acts as the Nucleophile in catalysis.

It belongs to the glycosyl hydrolase 5 (cellulase A) family.

It localises to the secreted. The protein resides in the extracellular space. It carries out the reaction Endohydrolysis of (1-&gt;4)-beta-D-glucosidic linkages in cellulose, lichenin and cereal beta-D-glucans.. Has avicelase and carboxymethylcellulase activity. The sequence is that of Endoglucanase Cel5A from Gloeophyllum trabeum (Brown rot fungus).